A 23-amino-acid chain; its full sequence is U3-ctenitoxin-Co1a (23 aa).

Intrachain disulfides connect Cys2/Cys17 and Cys9/Cys22.

In terms of tissue distribution, expressed by the venom gland.

It is found in the secreted. In terms of biological role, antagonist of L-type calcium channels (Cav1/CACNA1). This is U3-ctenitoxin-Co1a from Ctenus ornatus (Brazilian spider).